Here is a 205-residue protein sequence, read N- to C-terminus: Glycerol-3-phosphate acyltransferase 1 (205 aa).

A run of 5 helical transmembrane segments spans residues 7 to 27, 52 to 74, 78 to 100, 125 to 145, and 160 to 180; these read TLIGYVFGNFLTAMIVGKLFL, WGILTCLGDLLKSLIALFIVYFV, HINIAYAGLGLILGHCFPIWNHF, LLIALILTAIMQNLTIPPLVF, and AGIVFMVITLIMVYKFWQDII.

Belongs to the PlsY family. In terms of assembly, probably interacts with PlsX.

It localises to the cell membrane. It carries out the reaction an acyl phosphate + sn-glycerol 3-phosphate = a 1-acyl-sn-glycero-3-phosphate + phosphate. It participates in lipid metabolism; phospholipid metabolism. Functionally, catalyzes the transfer of an acyl group from acyl-phosphate (acyl-PO(4)) to glycerol-3-phosphate (G3P) to form lysophosphatidic acid (LPA). This enzyme utilizes acyl-phosphate as fatty acyl donor, but not acyl-CoA or acyl-ACP. The polypeptide is Glycerol-3-phosphate acyltransferase 1 (Lactobacillus acidophilus (strain ATCC 700396 / NCK56 / N2 / NCFM)).